A 122-amino-acid polypeptide reads, in one-letter code: MIQQESRLRVADNSGARELLVIRVLGGSVRRFAGIGDIVVATVKEAIPGGNVKEGDIVKAVIVRAKKETRRPDGSYIAFDENAAVILKGDNEPRGTRIFGPVARELRDKRFMKIVSLAPEVI.

It belongs to the universal ribosomal protein uL14 family. In terms of assembly, part of the 50S ribosomal subunit. Forms a cluster with proteins L3 and L19. In the 70S ribosome, L14 and L19 interact and together make contacts with the 16S rRNA in bridges B5 and B8.

Its function is as follows. Binds to 23S rRNA. Forms part of two intersubunit bridges in the 70S ribosome. This chain is Large ribosomal subunit protein uL14, found in Corynebacterium aurimucosum (strain ATCC 700975 / DSM 44827 / CIP 107346 / CN-1) (Corynebacterium nigricans).